The chain runs to 125 residues: Small ribosomal subunit protein eS6 (125 aa).

Residues 90-109 (KGPGFRPKEKGERRKKTVRG) form a disordered region.

The protein belongs to the eukaryotic ribosomal protein eS6 family. In terms of assembly, part of the 30S ribosomal subunit.

The chain is Small ribosomal subunit protein eS6 from Pyrococcus furiosus (strain ATCC 43587 / DSM 3638 / JCM 8422 / Vc1).